The sequence spans 151 residues: Hemoglobin-2 (151 aa).

Residue Thr2 is modified to N-acetylthreonine. The Globin domain maps to 3-148; that stretch reads TLTNPQKAAI…ICKTLGDYMK (146 aa). A heme b-binding site is contributed by His97.

It belongs to the globin family. In terms of assembly, homotetramer.

The protein resides in the cytoplasm. This chain is Hemoglobin-2, found in Phacoides pectinatus (Thick lucine).